Consider the following 350-residue polypeptide: Eukaryotic translation initiation factor 3 subunit I (350 aa).

WD repeat units lie at residues 8-49 (GHER…GTLE), 51-89 (HQGV…CVYT), 91-135 (NSPS…ASLT), 149-190 (QNGS…KSLQ), 198-240 (EKNV…KVYK), and 296-335 (GHFG…KDFL).

The protein belongs to the eIF-3 subunit I family. In terms of assembly, component of the eukaryotic translation initiation factor 3 (eIF-3) complex.

The protein resides in the cytoplasm. Component of the eukaryotic translation initiation factor 3 (eIF-3) complex, which is involved in protein synthesis of a specialized repertoire of mRNAs and, together with other initiation factors, stimulates binding of mRNA and methionyl-tRNAi to the 40S ribosome. The eIF-3 complex specifically targets and initiates translation of a subset of mRNAs involved in cell proliferation. The sequence is that of Eukaryotic translation initiation factor 3 subunit I from Lodderomyces elongisporus (strain ATCC 11503 / CBS 2605 / JCM 1781 / NBRC 1676 / NRRL YB-4239) (Yeast).